A 69-amino-acid chain; its full sequence is Small, acid-soluble spore protein 1 (69 aa).

This sequence belongs to the alpha/beta-type SASP family.

Functionally, SASP are bound to spore DNA. They are double-stranded DNA-binding proteins that cause DNA to change to an a-like conformation. They protect the DNA backbone from chemical and enzymatic cleavage and are thus involved in dormant spore's high resistance to UV light. The protein is Small, acid-soluble spore protein 1 (Su-1) of Sporosarcina ureae.